The following is a 231-amino-acid chain: Class A basic helix-loop-helix protein 9 (231 aa).

The 53-residue stretch at 61–113 folds into the bHLH domain; sequence ARRMAANVRERKRILDYNEAFNALRRALQHDLGGKRLSKIATLRRAIHRITAL. A disordered region spans residues 135–168; sequence QAAQGSSTGNSSFSVPRSAPSPIAPSLTRRDIAS. Over residues 137–149 the composition is skewed to polar residues; it reads AQGSSTGNSSFSV.

As to quaternary structure, heterodimer. Efficient DNA binding requires dimerization with another bHLH protein. Interacts with TCF3, TCF4, and TCF12.

It is found in the nucleus. Transcription factor, which play a role in limb development. Is an essential player in the regulatory network governing transcription of genes implicated in limb morphogenesis. This chain is Class A basic helix-loop-helix protein 9 (Bhlha9), found in Mus musculus (Mouse).